The following is a 102-amino-acid chain: Small ribosomal subunit protein uS10 (102 aa).

It belongs to the universal ribosomal protein uS10 family. In terms of assembly, part of the 30S ribosomal subunit.

Involved in the binding of tRNA to the ribosomes. In Pseudothermotoga lettingae (strain ATCC BAA-301 / DSM 14385 / NBRC 107922 / TMO) (Thermotoga lettingae), this protein is Small ribosomal subunit protein uS10.